The primary structure comprises 520 residues: Nonsense-mediated mRNA decay factor SMG9 (520 aa).

3 disordered regions span residues 1 to 94 (MSES…PAPL), 108 to 143 (KGPV…QRPT), and 341 to 360 (KPST…SDEG). Residue Ser-2 is modified to N-acetylserine. Phosphoserine is present on residues Ser-2, Ser-4, Ser-7, Ser-32, and Ser-53. The segment covering 36-53 (GRERDYIAPWERERRDAS) has biased composition (basic and acidic residues). Composition is skewed to pro residues over residues 78 to 94 (QPPP…PAPL) and 122 to 133 (TAPPPPAAPAPP). A compositionally biased stretch (low complexity) spans 342-357 (PSTPSPSHESSSSSGS). At Ser-451 the chain carries Phosphoserine.

It belongs to the SMG9 family. In terms of assembly, self-associates to form homodimers and forms heterodimers with SMG8; these assembly forms may represent SMG1C intermediate forms. Component of the SMG1C complex composed of SMG1, SMG8 and SMG9. Interacts with DHX34; the interaction is RNA-independent. Phosphorylated by SMG1.

Involved in nonsense-mediated decay (NMD) of mRNAs containing premature stop codons. Is recruited by release factors to stalled ribosomes together with SMG1 and SMG8 (forming the SMG1C protein kinase complex) and, in the SMG1C complex, is required for the efficient association between SMG1 and SMG8. Plays a role in brain, heart, and eye development. The protein is Nonsense-mediated mRNA decay factor SMG9 of Homo sapiens (Human).